The primary structure comprises 83 residues: Beta/kappa-theraphotoxin-Cg2a (83 aa).

An N-terminal signal peptide occupies residues 1-21 (MKASVFAVILGLVVLCACSFA). Positions 22–53 (EDEQDQFVSPNELLKSMFVESRHEFTPEVEGR) are excised as a propeptide. Intrachain disulfides connect C55–C69, C62–C74, and C68–C78. I82 bears the Isoleucine amide mark.

The protein belongs to the neurotoxin 30 (phrixotoxin) family. In terms of tissue distribution, expressed by the venom gland.

It localises to the secreted. Its function is as follows. This gating-modifier toxin shows an important inhibitory activity on sodium channels. It is very active on Nav1.7/SCN9A (IC(50)~0.6 nM), and also shows activity on Nav1.3/SCN3A (IC(50)=292 nM), Nav1.4/SCN4A (IC(50)=2.2-159 nM), and Nav1.5/SCN5A (IC(50)=2.3-2.9 uM). It has also been shown to inhibit tetrodotoxin (TTX)-resistant (IC(50)=27.6 nM) and TTX-sensitive (IC(50)=30.2 nM) sodium channels in rat dorsal root ganglion neurons. Lower inhibitory activity has also been shown on potassium channels: Kv4.2/KCND2 (IC(50)=604.2 nM), Kv4.3/KCND3 (IC(50)=425.1 nM), and Kv2.1/KCNB1 (IC(50)=14.3 uM). It binds to phospholipid membranes. Like its analog AM-8145, it may act by interacting only with the second voltage-sensor domain of Nav1.7/SCN9A. The chain is Beta/kappa-theraphotoxin-Cg2a from Chilobrachys guangxiensis (Chinese earth tiger tarantula).